Reading from the N-terminus, the 448-residue chain is tRNA modification GTPase MnmE (448 aa).

R24, E81, and K120 together coordinate (6S)-5-formyl-5,6,7,8-tetrahydrofolate. One can recognise a TrmE-type G domain in the interval 216 to 373 (GLNVVLVGAP…LKRTLLCEAG (158 aa)). Residue N226 coordinates K(+). GTP contacts are provided by residues 226–231 (NVGKSS), 245–251 (TDIAGTT), and 270–273 (DTAG). S230 provides a ligand contact to Mg(2+). K(+) contacts are provided by T245, I247, and T250. Mg(2+) is bound at residue T251. A (6S)-5-formyl-5,6,7,8-tetrahydrofolate-binding site is contributed by K448.

It belongs to the TRAFAC class TrmE-Era-EngA-EngB-Septin-like GTPase superfamily. TrmE GTPase family. Homodimer. Heterotetramer of two MnmE and two MnmG subunits. The cofactor is K(+).

It is found in the cytoplasm. Exhibits a very high intrinsic GTPase hydrolysis rate. Involved in the addition of a carboxymethylaminomethyl (cmnm) group at the wobble position (U34) of certain tRNAs, forming tRNA-cmnm(5)s(2)U34. The sequence is that of tRNA modification GTPase MnmE from Neisseria gonorrhoeae (strain ATCC 700825 / FA 1090).